Reading from the N-terminus, the 404-residue chain is G-protein coupled receptor 143 (404 aa).

At 1–28 (MASPRLGTFCCPTRDAATQLVLSFQPRA) the chain is on the extracellular side. Residues 29-49 (FHALCLGSGGLRLALGLLQLL) traverse the membrane as a helical segment. Residues 50–78 (PGRRPAGPGSPATSPPASVRILRAAAACD) are Cytoplasmic-facing. Residues 79–99 (LLGCLGMVIRSTVWLGFPNFV) traverse the membrane as a helical segment. The Extracellular segment spans residues 100–124 (DSVSDMNHTEIWPAAFCVGSAMWIQ). An N-linked (GlcNAc...) asparagine glycan is attached at Asn-106. The chain crosses the membrane as a helical span at residues 125-145 (LLYSACFWWLFCYAVDAYLVI). At 146–149 (RRSA) the chain is on the cytoplasmic side. A helical membrane pass occupies residues 150 to 170 (GLSTILLYHIMAWGLATLLCV). At 171–191 (EGAAMLYYPSVSRCERGLDHA) the chain is on the extracellular side. A helical transmembrane segment spans residues 192-212 (IPHYVTMYLPLLLVLVANPIL). Topologically, residues 213–248 (FQKTVTAVASLLKGRQGIYTENERRMGAVIKIRFFK) are cytoplasmic. Residues 221 to 238 (ASLLKGRQGIYTENERRM) form a necessary for its G protein-activation ability and normal distribution of melanosomes region. The lysosomal/melanosomal membrane localization signal motif lies at 222–231 (SLLKGRQGIY). Residues 249–269 (IMLVLIICWLSNIINESLLFY) form a helical membrane-spanning segment. Over 270 to 292 (LEMQTDINGGSLKPVRTAAKTTW) the chain is Extracellular. A helical membrane pass occupies residues 293-313 (FIMGILNPAQGFLLSLAFYGW). The Cytoplasmic segment spans residues 314-404 (TGCSLGFQSP…DPALPTHGDL (91 aa)). A lysosomal/melanosomal membrane localization signal motif is present at residues 329 to 330 (WE). The interval 338–404 (EGAHPSPLMP…DPALPTHGDL (67 aa)) is disordered. Polar residues predominate over residues 355–366 (KVSQVGGQTSDE).

Belongs to the G-protein coupled receptor OA family. In terms of assembly, interacts with heterotrimeric G(i) proteins. Interacts with ARRB1 and ARRB2. Interacts with MLANA. Glycosylated. In terms of processing, phosphorylated. As to expression, expressed at high levels in the retina, including the retinal pigment epithelium (RPE), and in melanocytes. Weak expression is observed in brain and adrenal gland.

The protein localises to the melanosome membrane. The protein resides in the lysosome membrane. It localises to the apical cell membrane. Receptor for tyrosine, L-DOPA and dopamine. After binding to L-DOPA, stimulates Ca(2+) influx into the cytoplasm, increases secretion of the neurotrophic factor SERPINF1 and relocalizes beta arrestin at the plasma membrane; this ligand-dependent signaling occurs through a G(q)-mediated pathway in melanocytic cells. Its activity is mediated by G proteins which activate the phosphoinositide signaling pathway. Also plays a role as an intracellular G protein-coupled receptor involved in melanosome biogenesis, organization and transport. The protein is G-protein coupled receptor 143 (GPR143) of Homo sapiens (Human).